A 56-amino-acid polypeptide reads, in one-letter code: MASKGGREKIKLESTAGTGHFYTTNKNKKTTPEKLEFMKFDPKVRKHVLYKEVKLR.

Residues 1-12 (MASKGGREKIKL) show a composition bias toward basic and acidic residues. Positions 1–27 (MASKGGREKIKLESTAGTGHFYTTNKN) are disordered.

Belongs to the bacterial ribosomal protein bL33 family.

The polypeptide is Large ribosomal subunit protein bL33 (Leptothrix cholodnii (strain ATCC 51168 / LMG 8142 / SP-6) (Leptothrix discophora (strain SP-6))).